A 318-amino-acid polypeptide reads, in one-letter code: Putative 2-hydroxyacid dehydrogenase SSP0606 (318 aa).

NAD(+) is bound by residues 156–157 (EI), 235–237 (ASR), and Asp261. Arg237 is an active-site residue. The active site involves Glu266. The Proton donor role is filled by His284. 284-287 (HIGN) contacts NAD(+).

Belongs to the D-isomer specific 2-hydroxyacid dehydrogenase family.

This Staphylococcus saprophyticus subsp. saprophyticus (strain ATCC 15305 / DSM 20229 / NCIMB 8711 / NCTC 7292 / S-41) protein is Putative 2-hydroxyacid dehydrogenase SSP0606.